The primary structure comprises 203 residues: Glycerol-3-phosphate acyltransferase (203 aa).

The next 4 helical transmembrane spans lie at 7–27 (TLLM…VLVC), 82–102 (AVSL…PVFF), 118–138 (APIG…LLLI), and 141–161 (YSSL…WWLD).

Belongs to the PlsY family. In terms of assembly, probably interacts with PlsX.

Its subcellular location is the cell inner membrane. It carries out the reaction an acyl phosphate + sn-glycerol 3-phosphate = a 1-acyl-sn-glycero-3-phosphate + phosphate. It functions in the pathway lipid metabolism; phospholipid metabolism. Functionally, catalyzes the transfer of an acyl group from acyl-phosphate (acyl-PO(4)) to glycerol-3-phosphate (G3P) to form lysophosphatidic acid (LPA). This enzyme utilizes acyl-phosphate as fatty acyl donor, but not acyl-CoA or acyl-ACP. The protein is Glycerol-3-phosphate acyltransferase of Shewanella baltica (strain OS223).